The primary structure comprises 148 residues: MFDVTLLILLGLAALGFISHNTTVAVSILVLIIVRVTPLNTFFPWIEKQGLTVGIIILTIGVMAPIASGTLPPSTLIHSFVNWKSLVAIAVGVFVSWLGGRGITLMGNQPQLVAGLLVGTVLGVALFRGVPVGPLIAAGLVSLIVGKQ.

A run of 4 helical transmembrane segments spans residues 14 to 34 (ALGF…LIIV), 51 to 71 (LTVG…SGTL), 86 to 106 (LVAI…ITLM), and 121 to 141 (VLGV…AGLV).

This sequence belongs to the UPF0756 family.

The protein localises to the cell membrane. The protein is UPF0756 membrane protein YeaL of Salmonella choleraesuis (strain SC-B67).